A 224-amino-acid polypeptide reads, in one-letter code: Toxin coregulated pilin (224 aa).

Positions 1-25 are cleaved as a propeptide — atypical leader sequence; the sequence is MQLLKQLFKKKFVKEEHDKKTGQEG. Position 26 is an N-methylmethionine (Met26). The helical transmembrane segment at 26 to 46 threads the bilayer; that stretch reads MTLLEVIIVLGIMGVVSAGVV. Residues Cys145 and Cys211 are joined by a disulfide bond.

It is found in the fimbrium. The protein resides in the membrane. In terms of biological role, major component of the toxin co-regulated pilus (tcp) which is a type IV pilus essential for bacterial aggregation and subsequent colonization in the host small intestine. This Vibrio cholerae protein is Toxin coregulated pilin (tcpA).